Consider the following 327-residue polypeptide: GTPase Obg (327 aa).

In terms of domain architecture, Obg spans 1–159; the sequence is MQFIDQANII…WEVQLELKLL (159 aa). The OBG-type G domain maps to 160 to 327; that stretch reads AEVGIIGLPN…SLLSEVWKRI (168 aa). Residues 166–173, 191–195, 213–216, 280–283, and 309–311 each bind ATP; these read GLPNAGKS, FTTLI, DIPG, NKME, and SSS. Mg(2+)-binding residues include serine 173 and threonine 193.

This sequence belongs to the TRAFAC class OBG-HflX-like GTPase superfamily. OBG GTPase family. Monomer. Mg(2+) is required as a cofactor.

The protein localises to the cytoplasm. Its function is as follows. An essential GTPase which binds GTP, GDP and possibly (p)ppGpp with moderate affinity, with high nucleotide exchange rates and a fairly low GTP hydrolysis rate. Plays a role in control of the cell cycle, stress response, ribosome biogenesis and in those bacteria that undergo differentiation, in morphogenesis control. The polypeptide is GTPase Obg (Prochlorococcus marinus (strain MIT 9301)).